The sequence spans 433 residues: Cyclin-dependent kinase 15 (433 aa).

Residues 46 to 83 (ASSSTASFHPRGLEAASAQKLKSKRPRSNSDSFQEENL) form a disordered region. Positions 52 to 336 (SFHPRGLEAA…SKLPNYNPEW (285 aa)) constitute a Protein kinase domain. Residues 58–66 (LEAASAQKL) and Glu81 contribute to the ATP site. The Proton acceptor role is filled by Thr173.

It belongs to the protein kinase superfamily. CMGC Ser/Thr protein kinase family. CDC2/CDKX subfamily. It depends on Mg(2+) as a cofactor.

It carries out the reaction L-seryl-[protein] + ATP = O-phospho-L-seryl-[protein] + ADP + H(+). It catalyses the reaction L-threonyl-[protein] + ATP = O-phospho-L-threonyl-[protein] + ADP + H(+). In terms of biological role, serine/threonine-protein kinase that acts like an antiapoptotic protein that counters TRAIL/TNFSF10-induced apoptosis by inducing phosphorylation of BIRC5 at 'Thr-34'. This chain is Cyclin-dependent kinase 15 (Cdk15), found in Mus musculus (Mouse).